The primary structure comprises 312 residues: Putative clathrin assembly protein At2g01920 (312 aa).

The ENTH domain maps to 21 to 152 (LITATDEKFT…ILYYNKNMIR (132 aa)).

It is found in the membrane. It localises to the clathrin-coated pit. The protein resides in the golgi apparatus. The protein localises to the cytoplasmic vesicle. Its subcellular location is the clathrin-coated vesicle. The protein is Putative clathrin assembly protein At2g01920 of Arabidopsis thaliana (Mouse-ear cress).